A 682-amino-acid polypeptide reads, in one-letter code: DNA ligase (682 aa).

NAD(+) is bound by residues 42 to 46, 91 to 92, and Glu124; these read DAEYD and SL. Lys126 acts as the N6-AMP-lysine intermediate in catalysis. Residues Arg147, Glu184, Lys302, and Lys326 each contribute to the NAD(+) site. 4 residues coordinate Zn(2+): Cys420, Cys423, Cys438, and Cys444. Positions 603-682 constitute a BRCT domain; the sequence is IADNPLKGKS…QEFIALTGEN (80 aa).

This sequence belongs to the NAD-dependent DNA ligase family. LigA subfamily. Mg(2+) is required as a cofactor. It depends on Mn(2+) as a cofactor.

It catalyses the reaction NAD(+) + (deoxyribonucleotide)n-3'-hydroxyl + 5'-phospho-(deoxyribonucleotide)m = (deoxyribonucleotide)n+m + AMP + beta-nicotinamide D-nucleotide.. Functionally, DNA ligase that catalyzes the formation of phosphodiester linkages between 5'-phosphoryl and 3'-hydroxyl groups in double-stranded DNA using NAD as a coenzyme and as the energy source for the reaction. It is essential for DNA replication and repair of damaged DNA. In Actinobacillus pleuropneumoniae serotype 3 (strain JL03), this protein is DNA ligase.